We begin with the raw amino-acid sequence, 1505 residues long: Anaphase-promoting complex subunit 1 (1505 aa).

Belongs to the APC1 family. As to quaternary structure, the APC/C complex is probably composed of at least 12 subunits: apc-2, apc-10, apc-11, cdc-26, emb-1, emb-27, emb-30, mat-1, mat-2, mat-3, such-1 and gfi-3.

Its pathway is protein modification; protein ubiquitination. Probable component of the anaphase promoting complex/cyclosome (APC/C), a cell cycle-regulated E3 ubiquitin ligase that controls progression through mitosis and the G1 phase of the cell cycle. The APC/C complex acts by mediating ubiquitination and subsequent degradation of target proteins. Developmental role in early embryogenesis and the metaphase to anaphase transition in oocyte and spermatocyte meiosis and mitosis in germ cells. Required for embryonic anterior-posterior axis formation. Plays a role in regulating the abundance of glr-1 receptors in postmitotic neurons, which may in turn control animal locomotion. Involved in regulating GABA neurotransmitter release at neuromuscular junctions in GABA motor neurons. This chain is Anaphase-promoting complex subunit 1, found in Caenorhabditis elegans.